We begin with the raw amino-acid sequence, 497 residues long: Protein nucleotidyltransferase YdiU (497 aa).

Glycine 88, glycine 90, arginine 91, lysine 110, aspartate 122, glycine 123, arginine 173, and arginine 180 together coordinate ATP. Catalysis depends on aspartate 249, which acts as the Proton acceptor. Mg(2+)-binding residues include asparagine 250 and aspartate 259. Position 259 (aspartate 259) interacts with ATP. The interval 477–497 is disordered; sequence FARYAEPPEGGGRGYRTFCGT.

It belongs to the SELO family. Mg(2+) is required as a cofactor. Requires Mn(2+) as cofactor.

It carries out the reaction L-seryl-[protein] + ATP = 3-O-(5'-adenylyl)-L-seryl-[protein] + diphosphate. The catalysed reaction is L-threonyl-[protein] + ATP = 3-O-(5'-adenylyl)-L-threonyl-[protein] + diphosphate. It catalyses the reaction L-tyrosyl-[protein] + ATP = O-(5'-adenylyl)-L-tyrosyl-[protein] + diphosphate. The enzyme catalyses L-histidyl-[protein] + UTP = N(tele)-(5'-uridylyl)-L-histidyl-[protein] + diphosphate. It carries out the reaction L-seryl-[protein] + UTP = O-(5'-uridylyl)-L-seryl-[protein] + diphosphate. The catalysed reaction is L-tyrosyl-[protein] + UTP = O-(5'-uridylyl)-L-tyrosyl-[protein] + diphosphate. Functionally, nucleotidyltransferase involved in the post-translational modification of proteins. It can catalyze the addition of adenosine monophosphate (AMP) or uridine monophosphate (UMP) to a protein, resulting in modifications known as AMPylation and UMPylation. The chain is Protein nucleotidyltransferase YdiU from Methylorubrum extorquens (strain PA1) (Methylobacterium extorquens).